The chain runs to 153 residues: 6,7-dimethyl-8-ribityllumazine synthase (153 aa).

5-amino-6-(D-ribitylamino)uracil-binding positions include Phe-22, 56-58, and 80-82; these read AFE and AVI. A (2S)-2-hydroxy-3-oxobutyl phosphate-binding site is contributed by 85–86; sequence ST. Residue His-88 is the Proton donor of the active site. A 5-amino-6-(D-ribitylamino)uracil-binding site is contributed by Phe-113. A (2S)-2-hydroxy-3-oxobutyl phosphate-binding site is contributed by Arg-127.

It belongs to the DMRL synthase family.

It carries out the reaction (2S)-2-hydroxy-3-oxobutyl phosphate + 5-amino-6-(D-ribitylamino)uracil = 6,7-dimethyl-8-(1-D-ribityl)lumazine + phosphate + 2 H2O + H(+). Its pathway is cofactor biosynthesis; riboflavin biosynthesis; riboflavin from 2-hydroxy-3-oxobutyl phosphate and 5-amino-6-(D-ribitylamino)uracil: step 1/2. Catalyzes the formation of 6,7-dimethyl-8-ribityllumazine by condensation of 5-amino-6-(D-ribitylamino)uracil with 3,4-dihydroxy-2-butanone 4-phosphate. This is the penultimate step in the biosynthesis of riboflavin. The protein is 6,7-dimethyl-8-ribityllumazine synthase of Clostridium botulinum (strain Eklund 17B / Type B).